We begin with the raw amino-acid sequence, 877 residues long: Alanine--tRNA ligase (877 aa).

Residues histidine 567, histidine 571, cysteine 669, and histidine 673 each coordinate Zn(2+).

The protein belongs to the class-II aminoacyl-tRNA synthetase family. Requires Zn(2+) as cofactor.

Its subcellular location is the cytoplasm. It catalyses the reaction tRNA(Ala) + L-alanine + ATP = L-alanyl-tRNA(Ala) + AMP + diphosphate. In terms of biological role, catalyzes the attachment of alanine to tRNA(Ala) in a two-step reaction: alanine is first activated by ATP to form Ala-AMP and then transferred to the acceptor end of tRNA(Ala). Also edits incorrectly charged Ser-tRNA(Ala) and Gly-tRNA(Ala) via its editing domain. The chain is Alanine--tRNA ligase from Lactobacillus delbrueckii subsp. bulgaricus (strain ATCC 11842 / DSM 20081 / BCRC 10696 / JCM 1002 / NBRC 13953 / NCIMB 11778 / NCTC 12712 / WDCM 00102 / Lb 14).